The primary structure comprises 992 residues: UPF0182 protein RHA1_ro06389 (992 aa).

7 helical membrane-spanning segments follow: residues 18-38 (VLLV…RLIS), 63-83 (LLLF…ALLL), 114-134 (LFGL…AQSS), 174-194 (WLFV…YIFG), 211-231 (VQLA…YWFD), 260-280 (KLIL…AIFL), and 288-308 (MATA…PLVV). The tract at residues 904-948 (TGSVATAPSAEEGTPPETGTTPPVDQGAAPAPTAPATPPSGTDVS) is disordered. Residues 908-934 (ATAPSAEEGTPPETGTTPPVDQGAAPA) are compositionally biased toward low complexity.

It belongs to the UPF0182 family.

The protein localises to the cell membrane. This is UPF0182 protein RHA1_ro06389 from Rhodococcus jostii (strain RHA1).